The sequence spans 510 residues: ATP synthase subunit alpha (510 aa).

169 to 176 serves as a coordination point for ATP; it reads GDRQTGKT.

The protein belongs to the ATPase alpha/beta chains family. F-type ATPases have 2 components, CF(1) - the catalytic core - and CF(0) - the membrane proton channel. CF(1) has five subunits: alpha(3), beta(3), gamma(1), delta(1), epsilon(1). CF(0) has three main subunits: a(1), b(2) and c(9-12). The alpha and beta chains form an alternating ring which encloses part of the gamma chain. CF(1) is attached to CF(0) by a central stalk formed by the gamma and epsilon chains, while a peripheral stalk is formed by the delta and b chains.

Its subcellular location is the cell inner membrane. The catalysed reaction is ATP + H2O + 4 H(+)(in) = ADP + phosphate + 5 H(+)(out). Produces ATP from ADP in the presence of a proton gradient across the membrane. The alpha chain is a regulatory subunit. The protein is ATP synthase subunit alpha of Anaeromyxobacter dehalogenans (strain 2CP-C).